The primary structure comprises 44 residues: Relaxin (44 aa).

Gln1 carries the pyrrolidone carboxylic acid modification. Intrachain disulfides connect Cys3/Cys31, Cys15/Cys44, and Cys30/Cys35.

It belongs to the insulin family. In terms of assembly, heterodimer of a B chain and an A chain linked by two disulfide bonds.

The protein resides in the secreted. The chain is Relaxin from Carcharias taurus (Sand tiger shark).